Here is a 118-residue protein sequence, read N- to C-terminus: Fluoride-specific ion channel FluC 1 (118 aa).

4 helical membrane-spanning segments follow: residues 5 to 25, 34 to 54, 56 to 76, and 98 to 118; these read FVLVGFGAALGAMLRYGISVL, FPFATFFINITGSFLLGFLVS, ALGPVWQLFLGTGFMGGYTTF, and YLGCTYVFGLIAAFLGLMLGV. Residues G71 and T74 each coordinate Na(+).

This sequence belongs to the fluoride channel Fluc/FEX (TC 1.A.43) family.

The protein localises to the cell membrane. The catalysed reaction is fluoride(in) = fluoride(out). With respect to regulation, na(+) is not transported, but it plays an essential structural role and its presence is essential for fluoride channel function. Functionally, fluoride-specific ion channel. Important for reducing fluoride concentration in the cell, thus reducing its toxicity. The sequence is that of Fluoride-specific ion channel FluC 1 from Listeria monocytogenes serotype 4b (strain F2365).